The following is a 492-amino-acid chain: Prenylcysteine oxidase 1-like (492 aa).

A signal peptide spans 1–21 (MAHAARLLAALAALLAAAATG). Asn-340 carries N-linked (GlcNAc...) asparagine glycosylation.

It belongs to the prenylcysteine oxidase family. It depends on FAD as a cofactor.

The protein localises to the secreted. In terms of biological role, likely to have oxidoreductase activity. Required in the mevalonate pathway to regulate prenylation and enhances the bactericidal activity of neutrophils. This is Prenylcysteine oxidase 1-like (PCYOX1L) from Bos taurus (Bovine).